The primary structure comprises 378 residues: Succinate--CoA ligase [ADP-forming] subunit beta (378 aa).

The region spanning 9-237 (RDIVARYGIP…IAGEPESEIK (229 aa)) is the ATP-grasp domain. ATP-binding positions include lysine 45, 52-54 (GRG), isoleucine 94, and glutamate 99. Residues asparagine 192 and aspartate 206 each contribute to the Mg(2+) site. Residues asparagine 257 and 314–316 (GIT) each bind substrate.

This sequence belongs to the succinate/malate CoA ligase beta subunit family. As to quaternary structure, heterotetramer of two alpha and two beta subunits. Mg(2+) is required as a cofactor.

It carries out the reaction succinate + ATP + CoA = succinyl-CoA + ADP + phosphate. It catalyses the reaction GTP + succinate + CoA = succinyl-CoA + GDP + phosphate. Its pathway is carbohydrate metabolism; tricarboxylic acid cycle; succinate from succinyl-CoA (ligase route): step 1/1. In terms of biological role, succinyl-CoA synthetase functions in the citric acid cycle (TCA), coupling the hydrolysis of succinyl-CoA to the synthesis of either ATP or GTP and thus represents the only step of substrate-level phosphorylation in the TCA. The beta subunit provides nucleotide specificity of the enzyme and binds the substrate succinate, while the binding sites for coenzyme A and phosphate are found in the alpha subunit. The polypeptide is Succinate--CoA ligase [ADP-forming] subunit beta (Herpetosiphon aurantiacus (strain ATCC 23779 / DSM 785 / 114-95)).